The chain runs to 90 residues: Probable Fe(2+)-trafficking protein (90 aa).

This sequence belongs to the Fe(2+)-trafficking protein family.

In terms of biological role, could be a mediator in iron transactions between iron acquisition and iron-requiring processes, such as synthesis and/or repair of Fe-S clusters in biosynthetic enzymes. The polypeptide is Probable Fe(2+)-trafficking protein (Haemophilus influenzae (strain PittEE)).